A 389-amino-acid chain; its full sequence is Lipid-A-disaccharide synthase (389 aa).

Belongs to the LpxB family.

It carries out the reaction a lipid X + a UDP-2-N,3-O-bis[(3R)-3-hydroxyacyl]-alpha-D-glucosamine = a lipid A disaccharide + UDP + H(+). It functions in the pathway bacterial outer membrane biogenesis; LPS lipid A biosynthesis. Functionally, condensation of UDP-2,3-diacylglucosamine and 2,3-diacylglucosamine-1-phosphate to form lipid A disaccharide, a precursor of lipid A, a phosphorylated glycolipid that anchors the lipopolysaccharide to the outer membrane of the cell. In Albidiferax ferrireducens (strain ATCC BAA-621 / DSM 15236 / T118) (Rhodoferax ferrireducens), this protein is Lipid-A-disaccharide synthase.